A 226-amino-acid chain; its full sequence is Exopolysaccharide production protein ExoY (226 aa).

Residues 34–54 (VLIAILALIALSPLFLLVMGL) traverse the membrane as a helical segment.

This sequence belongs to the bacterial sugar transferase family.

It is found in the cell membrane. It functions in the pathway glycan metabolism; exopolysaccharide biosynthesis. Its function is as follows. Needed for the addition of the first sugar (galactose) to the isoprenoid carrier. May function as a sugar transferase. The protein is Exopolysaccharide production protein ExoY (exoY) of Sinorhizobium fredii (strain NBRC 101917 / NGR234).